The chain runs to 428 residues: Enolase (428 aa).

Glutamine 163 serves as a coordination point for (2R)-2-phosphoglycerate. The active-site Proton donor is glutamate 205. The Mg(2+) site is built by aspartate 242, glutamate 286, and aspartate 313. (2R)-2-phosphoglycerate is bound by residues lysine 338, arginine 367, serine 368, and lysine 389. Lysine 338 serves as the catalytic Proton acceptor.

The protein belongs to the enolase family. It depends on Mg(2+) as a cofactor.

It is found in the cytoplasm. It localises to the secreted. The protein localises to the cell surface. The enzyme catalyses (2R)-2-phosphoglycerate = phosphoenolpyruvate + H2O. It functions in the pathway carbohydrate degradation; glycolysis; pyruvate from D-glyceraldehyde 3-phosphate: step 4/5. Catalyzes the reversible conversion of 2-phosphoglycerate (2-PG) into phosphoenolpyruvate (PEP). It is essential for the degradation of carbohydrates via glycolysis. The polypeptide is Enolase (Geobacter sulfurreducens (strain ATCC 51573 / DSM 12127 / PCA)).